The sequence spans 948 residues: MDVAESPELDPHSPEDEEQPALSDDDILRESGSEQDLDGAGERASDLEEEENATRVQSQEETRSDEEDRASEPKSQDQDSEAHELSRGPAGSPCEEGDDVEEDGTSDLRDEASSVTRELDEHELDYDEEVPEEPAPAAQEEEAEKAGAEEEEEKGEGAPGEEGKPDVQSVGEQEPTEAAKEKKKEDDDGEIDDGEIDDDDLEEGEVKDPSDRKVRPRPTCRFFMKGNCTWGMSCRFIHPGVNDKGNYSLITKAEPFPPNGAPPLGPHPLMPANPWGGPVVDEILPPPPPEPPTESAWERGLRHAKEVLKKATIRKEQEPDFEEKRFTVTIGEDDREFDKENEVFRDWNSRVPRDVRDTTLEPYADPYYDYEIERFWRGGQYENFRVQYTEAEPYHNYRERERERERENRQRERERERERDRERERRQRERERERERERDKERQRRKEEWERERAKRDEKDRQHRDRDRDKDREKDKEKPKPRSPQPPSRQAEPPKKESTSVGPQVKRADEWKDPWRRSKSPKKKLGVSVSPSRARRRRKTSASSASASNSSRSSSRSSSYSGSGSSRSRSRSSSYSSYSSRSSRHSSFSGSRSRSRSFSSSPSPSPTPSPHRPPVRTKGEPAPPPGKAGEKSIKKPAPPPAPPQATKTTAPGPEPAKPGDLREARRKERQTRTPPRRRTLSGSGSGSGSSYSGSSSRSRSLSVSSVSSVSSATSSSSSVHSVDSDDMYADLASPVSSASSRSPTPAQTKKERGKSKKEDGVREEKRRRDPSAQPPKSSKAPAGGKASQQAAAPQPAVPGQPQQGSFVAHKEIKLTLLNKAADKGSRKRYEPSDKDRQSPPAKKANLSPDRGSRDRKSGGRMGSPKPERQRGQNAKAPAAPADRKRPLSPQSKGSSKVTSVPGKATDTATAGTKSGKASTLSRREELLKQLKAVEDAIARKRAKIPGKV.

M1 carries the post-translational modification N-acetylmethionine. Residues 1-219 (MDVAESPELD…SDRKVRPRPT (219 aa)) are disordered. Residue S6 is modified to Phosphoserine. Over residues 15 to 25 (EDEEQPALSDD) the composition is skewed to acidic residues. Phosphoserine is present on residues S33, S45, S58, S64, S71, S75, S80, and S92. Residues 70–86 (ASEPKSQDQDSEAHELS) show a composition bias toward basic and acidic residues. Positions 95–105 (EEGDDVEEDGT) are enriched in acidic residues. T105 bears the Phosphothreonine mark. Phosphoserine is present on residues S106 and S114. A compositionally biased stretch (basic and acidic residues) spans 106–120 (SDLRDEASSVTRELD). 2 stretches are compositionally biased toward acidic residues: residues 121–132 (EHELDYDEEVPE) and 139–154 (QEEEAEKAGAEEEEEK). Phosphoserine is present on S169. Residues 177-186 (EAAKEKKKED) show a composition bias toward basic and acidic residues. The segment covering 187–203 (DDGEIDDGEIDDDDLEE) has biased composition (acidic residues). A compositionally biased stretch (basic and acidic residues) spans 204-213 (GEVKDPSDRK). Residues 215–241 (RPRPTCRFFMKGNCTWGMSCRFIHPGV) form a C3H1-type zinc finger. Residue G245 is modified to Omega-N-methylarginine. Disordered stretches follow at residues 272-296 (ANPWGGPVVDEILPPPPPEPPTESA) and 388-922 (YTEA…TLSR). Over residues 392-480 (EPYHNYRERE…DREKDKEKPK (89 aa)) the composition is skewed to basic and acidic residues. The stretch at 395–460 (HNYRERERER…RERAKRDEKD (66 aa)) forms a coiled coil. S483 carries the phosphoserine modification. Residue K506 forms a Glycyl lysine isopeptide (Lys-Gly) (interchain with G-Cter in SUMO2) linkage. The segment covering 506–516 (KRADEWKDPWR) has biased composition (basic and acidic residues). 3 positions are modified to phosphoserine: S528, S530, and S532. Positions 541–602 (SASSASASNS…SRSRSFSSSP (62 aa)) are enriched in low complexity. Pro residues predominate over residues 603-612 (SPSPTPSPHR). Glycyl lysine isopeptide (Lys-Gly) (interchain with G-Cter in SUMO2) cross-links involve residues K618 and K657. A compositionally biased stretch (basic and acidic residues) spans 657–666 (KPGDLREARR). 2 stretches are compositionally biased toward low complexity: residues 688-721 (GSSYSGSSSRSRSLSVSSVSSVSSATSSSSSVHS) and 732-746 (ASPVSSASSRSPTPA). Positions 756–770 (KKEDGVREEKRRRDP) are enriched in basic and acidic residues. Low complexity predominate over residues 774-804 (PPKSSKAPAGGKASQQAAAPQPAVPGQPQQG). K810 is subject to N6-acetyllysine. K813 is covalently cross-linked (Glycyl lysine isopeptide (Lys-Gly) (interchain with G-Cter in SUMO2)). The segment covering 820–837 (AADKGSRKRYEPSDKDRQ) has biased composition (basic and acidic residues). Residues S838, S847, S863, S888, and S891 each carry the phosphoserine modification. The segment covering 888-898 (SPQSKGSSKVT) has biased composition (polar residues). Positions 902–919 (GKATDTATAGTKSGKAST) are enriched in low complexity. K903 is covalently cross-linked (Glycyl lysine isopeptide (Lys-Gly) (interchain with G-Cter in SUMO2)). Residues 916 to 945 (KASTLSRREELLKQLKAVEDAIARKRAKIP) are a coiled coil.

In terms of assembly, interacts with ZFC3H1 in a RNase-insensitive manner.

The protein localises to the nucleus. The protein is Zinc finger CCCH domain-containing protein 18 (Zc3h18) of Mus musculus (Mouse).